The following is a 225-amino-acid chain: Ribonuclease 3 (225 aa).

Residues isoleucine 5–aspartate 127 form the RNase III domain. Mg(2+) is bound at residue glutamate 40. Aspartate 44 is a catalytic residue. Residues aspartate 113 and glutamate 116 each contribute to the Mg(2+) site. The active site involves glutamate 116. The DRBM domain occupies aspartate 154–asparagine 224.

Belongs to the ribonuclease III family. Homodimer. The cofactor is Mg(2+).

It is found in the cytoplasm. It carries out the reaction Endonucleolytic cleavage to 5'-phosphomonoester.. Functionally, digests double-stranded RNA. Involved in the processing of primary rRNA transcript to yield the immediate precursors to the large and small rRNAs (23S and 16S). Processes some mRNAs, and tRNAs when they are encoded in the rRNA operon. Processes pre-crRNA and tracrRNA of type II CRISPR loci if present in the organism. In Vibrio vulnificus (strain YJ016), this protein is Ribonuclease 3.